Here is a 379-residue protein sequence, read N- to C-terminus: Homoserine O-acetyltransferase (379 aa).

Residues 45–355 (NAILILHALT…PHGHDAFLIE (311 aa)) enclose the AB hydrolase-1 domain. Serine 151 acts as the Nucleophile in catalysis. Arginine 220 is a binding site for substrate. Catalysis depends on residues aspartate 316 and histidine 349. Substrate is bound at residue aspartate 350.

Belongs to the AB hydrolase superfamily. MetX family. Homodimer.

The protein localises to the cytoplasm. It catalyses the reaction L-homoserine + acetyl-CoA = O-acetyl-L-homoserine + CoA. The protein operates within amino-acid biosynthesis; L-methionine biosynthesis via de novo pathway; O-acetyl-L-homoserine from L-homoserine: step 1/1. Functionally, transfers an acetyl group from acetyl-CoA to L-homoserine, forming acetyl-L-homoserine. The polypeptide is Homoserine O-acetyltransferase (Carboxydothermus hydrogenoformans (strain ATCC BAA-161 / DSM 6008 / Z-2901)).